Here is a 426-residue protein sequence, read N- to C-terminus: Dihydroorotase (426 aa).

Zn(2+) contacts are provided by His55 and His57. Residues 57–59 (HLR) and Asn89 each bind substrate. Residues Asp147, His174, His233, and Asp306 each coordinate Zn(2+). Asp306 is an active-site residue. Residues His310 and 324 to 325 (FG) each bind substrate.

This sequence belongs to the metallo-dependent hydrolases superfamily. DHOase family. Class I DHOase subfamily. Zn(2+) is required as a cofactor.

It carries out the reaction (S)-dihydroorotate + H2O = N-carbamoyl-L-aspartate + H(+). The protein operates within pyrimidine metabolism; UMP biosynthesis via de novo pathway; (S)-dihydroorotate from bicarbonate: step 3/3. Its function is as follows. Catalyzes the reversible cyclization of carbamoyl aspartate to dihydroorotate. The chain is Dihydroorotase from Thermus aquaticus.